Consider the following 550-residue polypeptide: Vacuolar protein 8 (550 aa).

G2 is lipidated: N-myristoyl glycine. Residues C4 and C7 are each lipidated (S-palmitoyl cysteine). ARM repeat units follow at residues 75 to 114 (TEKDVREVDRETIEPVLFLLQSPDAEIQRAASVALGNLAV), 116 to 155 (AENKALVVKLNGLDLLIRQMMSPHVEVQCNAVGCITNLAT), 157 to 196 (DENKSKIAHSGALGPLTRLAKSKDIRVQRNATGALLNMTH), 198 to 237 (YENRQQLVSAGTIPVLVSLLPSSDTDVQYYCTTSISNIAV), 241 to 280 (HRKRLAQSEPKLVRSLIQLMDTSSPKVQCQAALALRNLAS), 282 to 321 (ERYQIEIVQSNALPSLLRLLRSSYLPLILASVACIRNISI), 323 to 363 (PLNE…NLAA), and 454 to 493 (FIECWDSPAGGIHGYLVRFLSSEDSTFAHIAAWTIVQLLE). A Phosphothreonine modification is found at T548. Phosphoserine is present on S550.

This sequence belongs to the beta-catenin family.

It localises to the golgi apparatus membrane. Its subcellular location is the vacuole membrane. Its function is as follows. Functions in both vacuole inheritance and protein targeting from the cytoplasm to vacuole. This chain is Vacuolar protein 8 (vac8), found in Schizosaccharomyces pombe (strain 972 / ATCC 24843) (Fission yeast).